The following is a 380-amino-acid chain: Cytochrome b (380 aa).

Helical transmembrane passes span 34 to 54 (FGSL…LLAA), 78 to 99 (WLLR…YLHI), 114 to 134 (WNTG…GYVL), and 179 to 199 (FFAL…IHLT). Positions 84 and 98 each coordinate heme b. The heme b site is built by histidine 183 and histidine 197. Histidine 202 lines the a ubiquinone pocket. Helical transmembrane passes span 227 to 247 (LKDI…ALFH), 289 to 309 (LGGV…PFLH), 321 to 341 (LSQL…WIGS), and 348 to 368 (FIII…VLFP).

This sequence belongs to the cytochrome b family. In terms of assembly, the cytochrome bc1 complex contains 11 subunits: 3 respiratory subunits (MT-CYB, CYC1 and UQCRFS1), 2 core proteins (UQCRC1 and UQCRC2) and 6 low-molecular weight proteins (UQCRH/QCR6, UQCRB/QCR7, UQCRQ/QCR8, UQCR10/QCR9, UQCR11/QCR10 and a cleavage product of UQCRFS1). This cytochrome bc1 complex then forms a dimer. The cofactor is heme b.

The protein localises to the mitochondrion inner membrane. In terms of biological role, component of the ubiquinol-cytochrome c reductase complex (complex III or cytochrome b-c1 complex) that is part of the mitochondrial respiratory chain. The b-c1 complex mediates electron transfer from ubiquinol to cytochrome c. Contributes to the generation of a proton gradient across the mitochondrial membrane that is then used for ATP synthesis. This Trogon curucui (Blue-crowned trogon) protein is Cytochrome b (MT-CYB).